Reading from the N-terminus, the 67-residue chain is Gallinacin-6 (67 aa).

A signal peptide spans 1 to 19 (MRILYLLLSVLFVVLQGVA). The propeptide occupies 20–25 (GQPYFS). Intrachain disulfides connect Cys-31/Cys-60, Cys-38/Cys-53, and Cys-43/Cys-61.

The protein belongs to the beta-defensin family. Expressed in bone marrow, testis, ovary, lung and trachea. Expressed in the ovarian stroma, but not in the ovarian follicles.

Its subcellular location is the secreted. The protein localises to the cytoplasmic granule. Its function is as follows. Has bactericidal activity. Potent activity against S.typhimurium and S.entiriditis. In Gallus gallus (Chicken), this protein is Gallinacin-6 (GAL6).